A 183-amino-acid chain; its full sequence is Capsid protein (183 aa).

The segment at 136-183 is disordered; the sequence is NAPILSTLPETTVVRRRGRSPRRRTPSPRRRRSQSPRRRRSQSRESQC. Residues 149 to 176 are compositionally biased toward basic residues; sequence VRRRGRSPRRRTPSPRRRRSQSPRRRRS. Phosphoserine; by host occurs at positions 155, 162, and 170. The stretch at 155–161 is one 1; half-length repeat; that stretch reads SPRRRTP. The segment at 155 to 177 is 3 X 8 AA repeats of S-P-R-R-R-[PR]-S-Q; it reads SPRRRTPSPRRRRSQSPRRRRSQ. Residues 158-175 carry the Bipartite nuclear localization signal motif; sequence RRTPSPRRRRSQSPRRRR. 2 consecutive repeat copies span residues 162–169 and 170–177. The tract at residues 177–183 is RNA binding; it reads QSRESQC.

Belongs to the orthohepadnavirus core antigen family. As to quaternary structure, homodimerizes, then multimerizes. Interacts with cytosol exposed regions of viral L glycoprotein present in the reticulum-to-Golgi compartment. Interacts with human FLNB. Phosphorylated form interacts with host importin alpha; this interaction depends on the exposure of the NLS, which itself depends upon genome maturation and/or phosphorylation of the capsid protein. Interacts with host NUP153. In terms of processing, phosphorylated by host SRPK1, SRPK2, and maybe protein kinase C or GAPDH. Phosphorylation is critical for pregenomic RNA packaging. Protein kinase C phosphorylation is stimulated by HBx protein and may play a role in transport of the viral genome to the nucleus at the late step during the viral replication cycle.

The protein localises to the virion. Its subcellular location is the host cytoplasm. Self assembles to form an icosahedral capsid. Most capsids appear to be large particles with an icosahedral symmetry of T=4 and consist of 240 copies of capsid protein, though a fraction forms smaller T=3 particles consisting of 180 capsid proteins. Entering capsids are transported along microtubules to the nucleus. Phosphorylation of the capsid is thought to induce exposure of nuclear localization signal in the C-terminal portion of the capsid protein that allows binding to the nuclear pore complex via the importin (karyopherin-) alpha and beta. Capsids are imported in intact form through the nuclear pore into the nuclear basket, where it probably binds NUP153. Only capsids that contain the mature viral genome can release the viral DNA and capsid protein into the nucleoplasm. Immature capsids get stuck in the basket. Capsids encapsulate the pre-genomic RNA and the P protein. Pre-genomic RNA is reverse-transcribed into DNA while the capsid is still in the cytoplasm. The capsid can then either be directed to the nucleus, providing more genomes for transcription, or bud through the endoplasmic reticulum to provide new virions. The chain is Capsid protein from Hepatitis B virus genotype D subtype ayw (isolate Italy/CI/1992) (HBV-D).